The sequence spans 692 residues: uncharacterized protein (692 aa).

Response regulatory domains lie at 9–130 (RVLY…LRMC) and 139–255 (RILI…EYRM). A 4-aspartylphosphate mark is found at aspartate 58 and aspartate 188. Positions 299–432 (GVHGLVIIDV…GGNQAHVWSA (134 aa)) constitute a GGDEF domain. One can recognise an EAL domain in the interval 443–691 (ESVIKRLVST…SFDFQHMSHD (249 aa)).

This is an uncharacterized protein from Thiocystis violacea.